The following is a 112-amino-acid chain: Inner membrane assembly complex subunit 17 (112 aa).

Residues 1 to 24 (MLRKLPINFAKWTVKKVPVQQKRF) constitute a mitochondrion transit peptide. The Mitochondrial matrix segment spans residues 25-44 (NSQQKEISPHIMFYKNYARP). Residues 45 to 62 (LGKVTLFALATYYGLEIV) form a helical membrane-spanning segment. The Mitochondrial intermembrane segment spans residues 63–112 (WWKLDASEQEAIKNSKLLICESSFSLLTFRRITEFRECEIKTRDLYDPEI).

This sequence belongs to the INA17 family. As to quaternary structure, component of the inner membrane assembly (INA) complex. Interacts with a subset of F(1)F(0)-ATP synthase subunits of the F(1)-domain and the peripheral stalk.

It is found in the mitochondrion inner membrane. Its function is as follows. Component of the INA complex (INAC) that promotes the biogenesis of mitochondrial F(1)F(0)-ATP synthase. INAC facilitates the assembly of the peripheral stalk and promotes the assembly of the catalytic F(1)-domain with the membrane-embedded F(0)-domain. The polypeptide is Inner membrane assembly complex subunit 17 (Schizosaccharomyces pombe (strain 972 / ATCC 24843) (Fission yeast)).